Here is a 306-residue protein sequence, read N- to C-terminus: N(1)-aminopropylagmatine ureohydrolase (306 aa).

The Mn(2+) site is built by histidine 121, aspartate 145, histidine 147, aspartate 149, aspartate 228, and aspartate 230.

The protein belongs to the arginase family. Mn(2+) serves as cofactor.

It catalyses the reaction N(1)-(3-aminopropyl)agmatine + H2O = urea + spermidine. Its pathway is amine and polyamine biosynthesis; spermidine biosynthesis. Its function is as follows. Ureohydrolase involved in the biosynthesis of spermidine via the carboxyaminopropylagmatine (CAPA) pathway. Catalyzes the conversion of aminopropylagmatine (APA) to spermidine and urea. Is highly specific to APA and incapable of releasing measurable urea from CAPA, agmatine, arginine, guanidine, guanidinobutyrate and guanidinopropionate. The chain is N(1)-aminopropylagmatine ureohydrolase from Synechocystis sp. (strain ATCC 27184 / PCC 6803 / Kazusa).